A 433-amino-acid chain; its full sequence is 23S rRNA (uracil(1939)-C(5))-methyltransferase RlmD (433 aa).

Positions 10–68 constitute a TRAM domain; the sequence is RTTTRQIITVSVNDLDSFGQGVARHNGKTLFIPGLLPQENAEVTVTEDKKQYARAKVVR. 2 interaction with RNA regions span residues 23–40 and 58–63; these read DLDS…KTLF and KKQYAR. [4Fe-4S] cluster-binding residues include Cys-81, Cys-87, Cys-90, and Cys-162. The S-adenosyl-L-methionine site is built by Gln-265, Phe-294, Asn-299, Glu-315, Asn-342, and Asp-363. Residue Cys-389 is the Nucleophile of the active site.

It belongs to the class I-like SAM-binding methyltransferase superfamily. RNA M5U methyltransferase family. RlmD subfamily.

The enzyme catalyses uridine(1939) in 23S rRNA + S-adenosyl-L-methionine = 5-methyluridine(1939) in 23S rRNA + S-adenosyl-L-homocysteine + H(+). In terms of biological role, catalyzes the formation of 5-methyl-uridine at position 1939 (m5U1939) in 23S rRNA. This chain is 23S rRNA (uracil(1939)-C(5))-methyltransferase RlmD, found in Escherichia coli (strain K12).